The following is a 1190-amino-acid chain: Isoleucine--tRNA ligase, cytoplasmic (1190 aa).

The 'HIGH' region signature appears at 49–59; the sequence is PFATGLPHYGH. The disordered stretch occupies residues 271 to 299; that stretch reads DKPKAKLSNGPAGDTKKANPKAKGAKPES. Residues 632 to 636 carry the 'KMSKS' region motif; it reads KMAKK. Lys635 is a binding site for ATP.

It belongs to the class-I aminoacyl-tRNA synthetase family.

The protein localises to the cytoplasm. It localises to the cytosol. The enzyme catalyses tRNA(Ile) + L-isoleucine + ATP = L-isoleucyl-tRNA(Ile) + AMP + diphosphate. This Arabidopsis thaliana (Mouse-ear cress) protein is Isoleucine--tRNA ligase, cytoplasmic.